Here is a 330-residue protein sequence, read N- to C-terminus: Polyprenal reductase (330 aa).

Residues 1–16 (MAGWAGAELSVLNPLR) are Cytoplasmic-facing. The chain crosses the membrane as a helical span at residues 17–37 (ALWLLLAAAFLLALLLQLAPA). At 38 to 89 (RLLPSCALFQDLIRYGKTKQSGSRRPAVCRAFDVPKRYFSHFYVVSVLWNGS) the chain is on the lumenal side. The helical transmembrane segment at 90–110 (LLWFLSQSLFLGAPFPSWLWA) threads the bilayer. Residues 111–136 (LLRTLGVTQFQALGMESKASRIQGKK) lie on the Cytoplasmic side of the membrane. A helical transmembrane segment spans residues 137 to 157 (LALSTFLVLVFLWVHSLRRLF). Over 158 to 169 (ECFYVSVFSNTA) the chain is Lumenal. A helical membrane pass occupies residues 170–190 (IHVVQYCFGLVYYVLVGLTVL). Topologically, residues 191 to 206 (SQVPMNDKNVYALGKN) are cytoplasmic. The chain crosses the membrane as a helical span at residues 207 to 227 (LLLQARWFHILGMMMFFWSSA). At 228 to 277 (HQYKCHVILSNLRRNKKGVVIHCQHRIPFGDWFEYVSSANYLAELMIYIS) the chain is on the lumenal side. A helical transmembrane segment spans residues 278-298 (MAVTFGLHNVTWWLVVTYVFF). At 299–330 (SQALSAFFNHRFYKSTFVSYPKHRKAFLPFLF) the chain is on the cytoplasmic side.

It belongs to the steroid 5-alpha reductase family. Polyprenal reductase subfamily. As to expression, expressed in the 2 tissues tested i.e. testis and liver.

It is found in the endoplasmic reticulum membrane. It catalyses the reaction a di-trans,poly-cis-dolichal + NADP(+) = a di-trans,poly-cis-polyprenal + NADPH + H(+). The enzyme catalyses a 3-oxo-5alpha-steroid + NADP(+) = a 3-oxo-Delta(4)-steroid + NADPH + H(+). It carries out the reaction androst-4-ene-3,17-dione + NADPH + H(+) = 5alpha-androstan-3,17-dione + NADP(+). The catalysed reaction is 17beta-hydroxy-5alpha-androstan-3-one + NADP(+) = testosterone + NADPH + H(+). Its pathway is protein modification; protein glycosylation. Functionally, plays a key role in early steps of protein N-linked glycosylation by being involved in the conversion of polyprenol into dolichol. Acts as a polyprenal reductase that mediates the reduction of polyprenal into dolichal in a NADP-dependent mechanism. Dolichols are required for the synthesis of dolichol-linked monosaccharides and the oligosaccharide precursor used for N-glycosylation. Also able to convert testosterone (T) into 5-alpha-dihydrotestosterone (DHT). This is Polyprenal reductase from Rattus norvegicus (Rat).